An 890-amino-acid chain; its full sequence is DNA mismatch repair protein MutS (890 aa).

Residue 607 to 614 (GPNMSGKS) coordinates ATP.

The protein belongs to the DNA mismatch repair MutS family.

In terms of biological role, this protein is involved in the repair of mismatches in DNA. It is possible that it carries out the mismatch recognition step. This protein has a weak ATPase activity. The sequence is that of DNA mismatch repair protein MutS from Bacillus mycoides (strain KBAB4) (Bacillus weihenstephanensis).